The primary structure comprises 918 residues: Nitrate reductase [NADH] (918 aa).

The tract at residues 25–44 (KNGPNHRADSPVRGCNFPNS) is disordered. Cys195 lines the Mo-molybdopterin pocket. The Cytochrome b5 heme-binding domain maps to 543–618 (SNTYTLSEVK…LEDYRIGELI (76 aa)). Residues His578 and His601 each coordinate heme. The region spanning 661 to 774 (NEKIPCKLIS…KGPLGHIEYT (114 aa)) is the FAD-binding FR-type domain. Residues 714–717 (RAYT), 731–735 (VVKVY), Phe736, Phe743, 748–750 (IMS), and Thr801 contribute to the FAD site.

It belongs to the nitrate reductase family. Homodimer. FAD serves as cofactor. It depends on heme as a cofactor. The cofactor is Mo-molybdopterin.

The catalysed reaction is nitrite + NAD(+) + H2O = nitrate + NADH + H(+). In terms of biological role, nitrate reductase is a key enzyme involved in the first step of nitrate assimilation in plants, fungi and bacteria. The protein is Nitrate reductase [NADH] of Cucurbita maxima (Pumpkin).